The primary structure comprises 583 residues: J protein JJJ2 (583 aa).

Residues 11–79 (RTTYYSILGL…KLRYDRDLKI (69 aa)) form the J domain. The span at 215–224 (SYSEDPNSCL) shows a compositional bias: polar residues. The segment at 215–313 (SYSEDPNSCL…SGSHDSNLQS (99 aa)) is disordered. Position 229 is a phosphoserine (serine 229). The segment covering 240 to 252 (QQQQQQQQQQQQQ) has biased composition (low complexity). Over residues 262 to 281 (SPDEEKKNNKEPKRESRVSP) the composition is skewed to basic and acidic residues. The span at 298–313 (KTSTFSSGSHDSNLQS) shows a compositional bias: polar residues.

It is found in the cytoplasm. Its subcellular location is the nucleus. The polypeptide is J protein JJJ2 (JJJ2) (Saccharomyces cerevisiae (strain ATCC 204508 / S288c) (Baker's yeast)).